Reading from the N-terminus, the 380-residue chain is MKLHEYQARDLLARFGIPVTGGGVAVTPVEARTIAAEIGGPVVVKAQVHVGGRGKAGGVKLAQTPTEAEQVARQILGMNIKGLTVEKVLVAEAVSYKRELYLSAILDRGSKRVMMIASAEGGVEIEEVAKTNPDAIIKIPAHPTMGLLDFQARELAFRIGLNDGKQARQFAQIASALYRAFVECDASLVEINPLVVKADGSLLALDSKILLDESALFRHPDLAALHDPSAEPEAERRAREAGITYIKLDGNIGCMVNGAGLAMATMDVIKLSGGEPANFLDIGGGAGKEKVKAALQIILSDPNVKAVLFNIFGGITRVDEVARGIIAALEEVPTDVPMVARLVGTNEEAGRALLAESKLIPAATLAEGAQKAVAAARGEL.

Residues 9–237 (RDLLARFGIP…PSAEPEAERR (229 aa)) enclose the ATP-grasp domain. ATP-binding positions include Lys45, 52-54 (GRG), Val94, and Glu99. Asn192 and Asp206 together coordinate Mg(2+). Substrate is bound by residues Asn257 and 314–316 (GIT).

The protein belongs to the succinate/malate CoA ligase beta subunit family. In terms of assembly, heterotetramer of two alpha and two beta subunits. Requires Mg(2+) as cofactor.

The catalysed reaction is succinate + ATP + CoA = succinyl-CoA + ADP + phosphate. The enzyme catalyses GTP + succinate + CoA = succinyl-CoA + GDP + phosphate. The protein operates within carbohydrate metabolism; tricarboxylic acid cycle; succinate from succinyl-CoA (ligase route): step 1/1. In terms of biological role, succinyl-CoA synthetase functions in the citric acid cycle (TCA), coupling the hydrolysis of succinyl-CoA to the synthesis of either ATP or GTP and thus represents the only step of substrate-level phosphorylation in the TCA. The beta subunit provides nucleotide specificity of the enzyme and binds the substrate succinate, while the binding sites for coenzyme A and phosphate are found in the alpha subunit. This chain is Succinate--CoA ligase [ADP-forming] subunit beta, found in Chloroflexus aurantiacus (strain ATCC 29366 / DSM 635 / J-10-fl).